Consider the following 158-residue polypeptide: MQNLSLSLVILSVLIAVTLACKCREQSTKESFCNAHWVSHVKVKVRVGKQGLPEGSERKGLNNLRYTVQHVEVFKKPSNMTTLPDEIFTPSEAPACGLKIAAGHEYLLAGRVEGPNALYTVLCGQVLPDDRSQTSFENVLEWKNVPQTLQSQVKSIKC.

The signal sequence occupies residues 1–20 (MQNLSLSLVILSVLIAVTLA). Position 21 (cysteine 21) interacts with Zn(2+). The tract at residues 21-25 (CKCRE) is involved in metalloproteinase-binding. 3 disulfides stabilise this stretch: cysteine 21-cysteine 96, cysteine 23-cysteine 123, and cysteine 33-cysteine 158. The region spanning 21 to 158 (CKCREQSTKE…LQSQVKSIKC (138 aa)) is the NTR domain. A glycan (N-linked (GlcNAc...) asparagine) is linked at asparagine 79. The segment at 93–94 (AP) is involved in metalloproteinase-binding.

It belongs to the protease inhibitor I35 (TIMP) family.

It is found in the secreted. In terms of biological role, complexes with metalloproteinases and irreversibly inactivates them by binding to their catalytic zinc cofactor. This Caenorhabditis elegans protein is Putative metalloproteinase inhibitor tag-225 (tag-225).